We begin with the raw amino-acid sequence, 473 residues long: tRNA modification GTPase MnmE (473 aa).

Residues arginine 28, glutamate 93, and arginine 132 each contribute to the (6S)-5-formyl-5,6,7,8-tetrahydrofolate site. The 167-residue stretch at glycine 228–alanine 394 folds into the TrmE-type G domain. GTP is bound by residues asparagine 238–threonine 243, serine 257–threonine 263, and aspartate 282–glycine 285. Residues serine 242 and threonine 263 each coordinate Mg(2+). Residue lysine 473 coordinates (6S)-5-formyl-5,6,7,8-tetrahydrofolate.

The protein belongs to the TRAFAC class TrmE-Era-EngA-EngB-Septin-like GTPase superfamily. TrmE GTPase family. In terms of assembly, homodimer. Heterotetramer of two MnmE and two MnmG subunits. Requires K(+) as cofactor.

It localises to the cytoplasm. In terms of biological role, exhibits a very high intrinsic GTPase hydrolysis rate. Involved in the addition of a carboxymethylaminomethyl (cmnm) group at the wobble position (U34) of certain tRNAs, forming tRNA-cmnm(5)s(2)U34. This chain is tRNA modification GTPase MnmE, found in Chlorobium chlorochromatii (strain CaD3).